The primary structure comprises 199 residues: UPF0637 protein LACR_1918 (199 aa).

It belongs to the UPF0637 family.

The polypeptide is UPF0637 protein LACR_1918 (Lactococcus lactis subsp. cremoris (strain SK11)).